The sequence spans 206 residues: Small ribosomal subunit protein uS4 (206 aa).

One can recognise an S4 RNA-binding domain in the interval 96 to 158; that stretch reads GRLDNVVYRM…AKQQSRIKAA (63 aa).

This sequence belongs to the universal ribosomal protein uS4 family. In terms of assembly, part of the 30S ribosomal subunit. Contacts protein S5. The interaction surface between S4 and S5 is involved in control of translational fidelity.

Functionally, one of the primary rRNA binding proteins, it binds directly to 16S rRNA where it nucleates assembly of the body of the 30S subunit. In terms of biological role, with S5 and S12 plays an important role in translational accuracy. This Aliivibrio fischeri (strain ATCC 700601 / ES114) (Vibrio fischeri) protein is Small ribosomal subunit protein uS4.